We begin with the raw amino-acid sequence, 439 residues long: Glutamate--tRNA ligase 1 (439 aa).

The 'HIGH' region signature appears at 6-16 (PSPTGDMHIGN). The 'KMSKS' region signature appears at 232–236 (KMSKR). Lysine 235 serves as a coordination point for ATP.

It belongs to the class-I aminoacyl-tRNA synthetase family. Glutamate--tRNA ligase type 1 subfamily. In terms of assembly, monomer.

It localises to the cytoplasm. It carries out the reaction tRNA(Glu) + L-glutamate + ATP = L-glutamyl-tRNA(Glu) + AMP + diphosphate. Its function is as follows. Catalyzes the attachment of glutamate to tRNA(Glu) in a two-step reaction: glutamate is first activated by ATP to form Glu-AMP and then transferred to the acceptor end of tRNA(Glu). The protein is Glutamate--tRNA ligase 1 of Helicobacter acinonychis (strain Sheeba).